The sequence spans 158 residues: Ribosomal RNA large subunit methyltransferase H (158 aa).

S-adenosyl-L-methionine-binding positions include Leu-73, Gly-107, and Phe-126–Leu-131.

The protein belongs to the RNA methyltransferase RlmH family. In terms of assembly, homodimer.

The protein resides in the cytoplasm. It catalyses the reaction pseudouridine(1915) in 23S rRNA + S-adenosyl-L-methionine = N(3)-methylpseudouridine(1915) in 23S rRNA + S-adenosyl-L-homocysteine + H(+). In terms of biological role, specifically methylates the pseudouridine at position 1915 (m3Psi1915) in 23S rRNA. The protein is Ribosomal RNA large subunit methyltransferase H of Rubrobacter xylanophilus (strain DSM 9941 / JCM 11954 / NBRC 16129 / PRD-1).